Here is a 441-residue protein sequence, read N- to C-terminus: Chromosome partition protein MukF (441 aa).

The segment at L208 to I236 is leucine-zipper.

The protein belongs to the MukF family. Interacts, and probably forms a ternary complex, with MukE and MukB via its C-terminal region. The complex formation is stimulated by calcium or magnesium. It is required for an interaction between MukE and MukB.

The protein localises to the cytoplasm. Its subcellular location is the nucleoid. Its function is as follows. Involved in chromosome condensation, segregation and cell cycle progression. May participate in facilitating chromosome segregation by condensation DNA from both sides of a centrally located replisome during cell division. Not required for mini-F plasmid partitioning. Probably acts via its interaction with MukB and MukE. Overexpression results in anucleate cells. It has a calcium binding activity. This is Chromosome partition protein MukF from Pectobacterium atrosepticum (strain SCRI 1043 / ATCC BAA-672) (Erwinia carotovora subsp. atroseptica).